The following is a 262-amino-acid chain: DNA repair protein RecO (262 aa).

Belongs to the RecO family.

Functionally, involved in DNA repair and RecF pathway recombination. In Acidovorax ebreus (strain TPSY) (Diaphorobacter sp. (strain TPSY)), this protein is DNA repair protein RecO.